A 242-amino-acid chain; its full sequence is DNA repair protein RecO (242 aa).

This sequence belongs to the RecO family. Monomer.

Functionally, involved in DNA repair and RecF pathway recombination. This is DNA repair protein RecO from Shigella flexneri serotype 5b (strain 8401).